Consider the following 277-residue polypeptide: MKQLYGVIGNPIGHSLSPVMHNDAFEHLNMDAHYLAFLVEEEALGEAVKGLKALGISGFNVTTPHKVAIMEYLDEIAPLARQIGAVNTVVHRDGKLIGYNTDGIGFVRALQSISEDPLQEKRILLIGAGGASRAIYFSLADVGVKEIDIANRTRDKAKNLISGCMENVNSHALSLECAAENQGEYDIIIQTTTIGMHPHVEYTPLEIRSLKQGTIVSDIIYNPFETKILGDAKEQGAIIQNGIDMFVYQGALAFEMWTGCVPNIDRMKQLVMRELGG.

Shikimate-binding positions include 15–17 and Thr-62; that span reads SLS. Catalysis depends on Lys-66, which acts as the Proton acceptor. Asn-87 and Asp-102 together coordinate shikimate. NADP(+)-binding positions include 127 to 131, 151 to 156, and Ile-219; these read GAGGA and NRTRDK. A shikimate-binding site is contributed by Tyr-221. NADP(+) is bound at residue Gly-242.

This sequence belongs to the shikimate dehydrogenase family. In terms of assembly, homodimer.

It carries out the reaction shikimate + NADP(+) = 3-dehydroshikimate + NADPH + H(+). Its pathway is metabolic intermediate biosynthesis; chorismate biosynthesis; chorismate from D-erythrose 4-phosphate and phosphoenolpyruvate: step 4/7. Involved in the biosynthesis of the chorismate, which leads to the biosynthesis of aromatic amino acids. Catalyzes the reversible NADPH linked reduction of 3-dehydroshikimate (DHSA) to yield shikimate (SA). In Bacillus mycoides (strain KBAB4) (Bacillus weihenstephanensis), this protein is Shikimate dehydrogenase (NADP(+)).